A 269-amino-acid polypeptide reads, in one-letter code: Tryptophan synthase alpha chain (269 aa).

Catalysis depends on proton acceptor residues glutamate 49 and aspartate 60.

Belongs to the TrpA family. Tetramer of two alpha and two beta chains.

The enzyme catalyses (1S,2R)-1-C-(indol-3-yl)glycerol 3-phosphate + L-serine = D-glyceraldehyde 3-phosphate + L-tryptophan + H2O. The protein operates within amino-acid biosynthesis; L-tryptophan biosynthesis; L-tryptophan from chorismate: step 5/5. The alpha subunit is responsible for the aldol cleavage of indoleglycerol phosphate to indole and glyceraldehyde 3-phosphate. This chain is Tryptophan synthase alpha chain, found in Stutzerimonas stutzeri (strain A1501) (Pseudomonas stutzeri).